The chain runs to 400 residues: Phosphoglycerate kinase (400 aa).

Substrate is bound by residues 21–23 (DFN), R37, 60–63 (HFGR), R119, and R152. ATP-binding positions include K205, G296, E327, and 353-356 (GGDT).

Belongs to the phosphoglycerate kinase family. In terms of assembly, monomer.

It localises to the cytoplasm. The enzyme catalyses (2R)-3-phosphoglycerate + ATP = (2R)-3-phospho-glyceroyl phosphate + ADP. It participates in carbohydrate degradation; glycolysis; pyruvate from D-glyceraldehyde 3-phosphate: step 2/5. This chain is Phosphoglycerate kinase, found in Aliarcobacter butzleri (strain RM4018) (Arcobacter butzleri).